Reading from the N-terminus, the 69-residue chain is Conotoxin reg3f (69 aa).

The signal sequence occupies residues 1–20; the sequence is MMSKLGVLLTICLLLFPLSA. Residues 21 to 52 constitute a propeptide that is removed on maturation; sequence LPLDGDQPADQPAERMQDISPEQNPLFHPDKR. 3 cysteine pairs are disulfide-bonded: Cys-54/Cys-68, Cys-55/Cys-66, and Cys-60/Cys-69. Position 69 is a cysteine amide (Cys-69).

In terms of tissue distribution, expressed by the venom duct.

Its subcellular location is the secreted. This Conus regius (Crown cone) protein is Conotoxin reg3f.